The sequence spans 136 residues: Cytidine deaminase (136 aa).

The CMP/dCMP-type deaminase domain occupies 1–128 (MNRQELITEA…ELLPGAFSSE (128 aa)). 42-44 (NIE) contributes to the substrate binding site. Cys53 contacts Zn(2+). Glu55 serves as the catalytic Proton donor. Zn(2+) is bound by residues Cys86 and Cys89.

Belongs to the cytidine and deoxycytidylate deaminase family. Homotetramer. Zn(2+) serves as cofactor.

The enzyme catalyses cytidine + H2O + H(+) = uridine + NH4(+). It catalyses the reaction 2'-deoxycytidine + H2O + H(+) = 2'-deoxyuridine + NH4(+). This enzyme scavenges exogenous and endogenous cytidine and 2'-deoxycytidine for UMP synthesis. The polypeptide is Cytidine deaminase (cdd) (Bacillus subtilis (strain 168)).